A 117-amino-acid chain; its full sequence is Immunoglobulin lambda variable 7-43 (117 aa).

Positions M1–S19 are cleaved as a signal peptide. Residues Q20 to S44 form a framework-1 region. One can recognise an Ig-like domain in the interval Q20–Q117. The cysteines at positions 41 and 109 are disulfide-linked. Positions T45 to Y53 are complementarity-determining-1. Residues P54–Y70 are framework-2. The segment at S71 to S73 is complementarity-determining-2. The tract at residues N74 to C109 is framework-3. Residues L110–Q117 are complementarity-determining-3.

Immunoglobulins are composed of two identical heavy chains and two identical light chains; disulfide-linked.

Its subcellular location is the secreted. The protein resides in the cell membrane. In terms of biological role, v region of the variable domain of immunoglobulin light chains that participates in the antigen recognition. Immunoglobulins, also known as antibodies, are membrane-bound or secreted glycoproteins produced by B lymphocytes. In the recognition phase of humoral immunity, the membrane-bound immunoglobulins serve as receptors which, upon binding of a specific antigen, trigger the clonal expansion and differentiation of B lymphocytes into immunoglobulins-secreting plasma cells. Secreted immunoglobulins mediate the effector phase of humoral immunity, which results in the elimination of bound antigens. The antigen binding site is formed by the variable domain of one heavy chain, together with that of its associated light chain. Thus, each immunoglobulin has two antigen binding sites with remarkable affinity for a particular antigen. The variable domains are assembled by a process called V-(D)-J rearrangement and can then be subjected to somatic hypermutations which, after exposure to antigen and selection, allow affinity maturation for a particular antigen. The polypeptide is Immunoglobulin lambda variable 7-43 (Homo sapiens (Human)).